The sequence spans 489 residues: Oxysterol-binding protein-related protein 1B (489 aa).

The protein belongs to the OSBP family. Expressed at low levels in flowers.

Functionally, may be involved in the transport of sterols. The chain is Oxysterol-binding protein-related protein 1B (ORP1B) from Arabidopsis thaliana (Mouse-ear cress).